Consider the following 299-residue polypeptide: Putative beta-glucosidase 2 (299 aa).

An N-terminal signal peptide occupies residues 1 to 16 (MLHCITTIFLSISRMT). Residue 49–50 (NE) coordinates a beta-D-glucoside. The active-site Proton donor is the glutamate 50. Cysteines 69 and 72 form a disulfide. Residues asparagine 71 and asparagine 76 are each glycosylated (N-linked (GlcNAc...) asparagine). Tyrosine 189 provides a ligand contact to a beta-D-glucoside. N-linked (GlcNAc...) asparagine glycosylation occurs at asparagine 222. Glutamate 255 serves as a coordination point for a beta-D-glucoside. Residue glutamate 255 is the Nucleophile of the active site. Residue asparagine 290 is glycosylated (N-linked (GlcNAc...) asparagine).

This sequence belongs to the glycosyl hydrolase 1 family.

The enzyme catalyses Hydrolysis of terminal, non-reducing beta-D-glucosyl residues with release of beta-D-glucose.. The chain is Putative beta-glucosidase 2 from Arabidopsis thaliana (Mouse-ear cress).